Here is a 381-residue protein sequence, read N- to C-terminus: Sulfate/thiosulfate import ATP-binding protein CysA (381 aa).

Positions 3–233 (ILVYEVSKSL…PIDYFVGIFS (231 aa)) constitute an ABC transporter domain. 35-42 (GPSGSGKS) serves as a coordination point for ATP.

It belongs to the ABC transporter superfamily. Sulfate/tungstate importer (TC 3.A.1.6) family.

Its subcellular location is the plastid. It is found in the chloroplast. The catalysed reaction is sulfate(out) + ATP + H2O = sulfate(in) + ADP + phosphate + H(+). It carries out the reaction thiosulfate(out) + ATP + H2O = thiosulfate(in) + ADP + phosphate + H(+). Part of the ABC transporter complex involved in sulfate/thiosulfate import. Responsible for energy coupling to the transport system. The polypeptide is Sulfate/thiosulfate import ATP-binding protein CysA (Anthoceros angustus (Hornwort)).